The primary structure comprises 341 residues: Solute carrier family 25 member 43 (341 aa).

Solcar repeat units follow at residues 11–101, 105–185, and 200–298; these read TGGQ…TDDL, SQWS…LLVY, and SLPQ…LYQN. The next 6 helical transmembrane spans lie at 16–36, 68–88, 110–130, 166–186, 205–225, and 262–282; these read LLCAGLAGTLSLSLTAPLELA, LWKGNAVACLRLFPCSAVQLA, IMAGSLAGMVSTIVTYPTDLI, GVSLTVVGALPFSAGSLLVYM, FANVCLAAAVTQTLSFPFETV, and VLGLWNGLTANLLKIVPYFGI.

It belongs to the mitochondrial carrier (TC 2.A.29) family.

Its subcellular location is the mitochondrion inner membrane. In Homo sapiens (Human), this protein is Solute carrier family 25 member 43 (SLC25A43).